Consider the following 89-residue polypeptide: Small ribosomal subunit protein uS14 (89 aa).

Belongs to the universal ribosomal protein uS14 family. In terms of assembly, part of the 30S ribosomal subunit. Contacts proteins S3 and S10.

In terms of biological role, binds 16S rRNA, required for the assembly of 30S particles and may also be responsible for determining the conformation of the 16S rRNA at the A site. In Chlorobium limicola (strain DSM 245 / NBRC 103803 / 6330), this protein is Small ribosomal subunit protein uS14.